The chain runs to 449 residues: MHPFASYVLRSYYRGTGWNEDNLYANLTRSSNAILDFSVPRGLHFSISKSPNPLFKTTYSMNALPSLNGSIGYIFTSCELDVKGSGDVRFKDMVDRFRVYDQPRRPEGKEEEWLAGERVDTRDYLLYGRVYIPTGRLDALYSTRLSPTLQAMVAAISDPRSSLFAESPRGIAAPSSNIMFSLQHDTGKWCTEYTWSAEDGMWGVRCLHNFGKVGGPSEPVEDSEKSTAAPTKTRSGVKRIDEEDAMEGGLKGRISAGAEFYFSAKEKSAGVSTGIRFTTLPDATPPSFQLPSSSPTQPSLLAHGAPSQPPTTITALFNPMLGHMSGAYSARVSRDLSMSSRFDFNVYSYESEWSIGAEWWTRRGRGMFTSNPPAADTSEKTPSSPPALEAVGDVTGVVKARASTTTDFSLMWEGRLHNMLVSLGIVSNLTSRSKPIKAIGLELSYFSSG.

Disordered regions lie at residues 215–244 (GPSE…DEED) and 282–307 (DATP…GAPS). Low complexity predominate over residues 285 to 301 (PPSFQLPSSSPTQPSLL).

The protein belongs to the MDM10 family. Component of the ER-mitochondria encounter structure (ERMES) or MDM complex, composed of MMM1, MDM10, MDM12 and MDM34. Associates with the mitochondrial outer membrane sorting assembly machinery SAM(core) complex.

It localises to the mitochondrion outer membrane. In terms of biological role, component of the ERMES/MDM complex, which serves as a molecular tether to connect the endoplasmic reticulum and mitochondria. Components of this complex are involved in the control of mitochondrial shape and protein biogenesis and may function in phospholipid exchange. MDM10 is involved in the late assembly steps of the general translocase of the mitochondrial outer membrane (TOM complex). Functions in the TOM40-specific route of the assembly of outer membrane beta-barrel proteins, including the association of TOM40 with the receptor TOM22 and small TOM proteins. Can associate with the SAM(core) complex as well as the MDM12-MMM1 complex, both involved in late steps of the major beta-barrel assembly pathway, that is responsible for biogenesis of all outer membrane beta-barrel proteins. May act as a switch that shuttles between both complexes and channels precursor proteins into the TOM40-specific pathway. Plays a role in mitochondrial morphology and in the inheritance of mitochondria. The sequence is that of Mitochondrial distribution and morphology protein 10 from Postia placenta (strain ATCC 44394 / Madison 698-R) (Brown rot fungus).